The sequence spans 117 residues: Toxin CSTX-12 (117 aa).

The signal sequence occupies residues 1 to 20 (MKVLVICAVLFLTIFSNSSA). Positions 21-47 (ETEDDFLEDESFEADDVIPFLAREQVR) are excised as a propeptide. Cystine bridges form between Cys50–Cys65, Cys57–Cys74, Cys64–Cys95, and Cys76–Cys93. A propeptide spanning residues 82–87 (RSDTAR) is cleaved from the precursor. Ala116 carries the post-translational modification Alanine amide.

This sequence belongs to the neurotoxin 19 (CSTX) family. 12 subfamily. Heterodimer of A and B chains; disulfide-linked. Interacts with CSTX-1 (AC P81694), and with CSTX-9 (AC P58604). Expressed by the venom gland.

It is found in the secreted. The protein localises to the target cell membrane. In terms of biological role, synergistic toxin that induces or increases a cytolytic effect when combined with CSTX-1 (AC P81694) or CSTX-9 (AC P58604). When alone, has a weak insecticidal activity, with an unknown molecular target. The chain is Toxin CSTX-12 from Cupiennius salei (American wandering spider).